The chain runs to 526 residues: Variant surface glycoprotein MITAT 1.4A (526 aa).

Residues 1–33 (MDCHTKETLGVTQWRRSTMLTLSLLYAITPADG) form the signal peptide. 2 disulfide bridges follow: Cys47–Cys173 and Cys154–Cys215. Residues 157 to 193 (NEGGDGDGKDQLAPKGCRHGTEADFDAGAGPAESEVA) form a disordered region. Asn453 carries N-linked (GlcNAc...) asparagine glycosylation. A lipid anchor (GPI-anchor amidated aspartate) is attached at Asp503. The propeptide at 504-526 (SSILVTKKFALTVVSAAFVALLF) is removed in mature form.

It localises to the cell membrane. In terms of biological role, VSG forms a coat on the surface of the parasite. The trypanosome evades the immune response of the host by expressing a series of antigenically distinct VSGs from an estimated 1000 VSG genes. This Trypanosoma brucei brucei protein is Variant surface glycoprotein MITAT 1.4A.